A 121-amino-acid chain; its full sequence is MDAVTDTPVTEMPAPFVFTDAAADKVKELIEEEGNPELKLRVFVQGGGCSGFQYGFTFDEAINEDDTVMNKSGVQLLIDSMSYQYLVGAEIDYKDDINGAQFVIKNPNATTTCGCGSSFSV.

The iron-sulfur cluster site is built by C49, C113, and C115.

Belongs to the HesB/IscA family. As to quaternary structure, homodimer. The cofactor is iron-sulfur cluster.

Required for insertion of 4Fe-4S clusters. This chain is Putative iron-sulfur cluster insertion protein ErpA, found in Paraburkholderia phymatum (strain DSM 17167 / CIP 108236 / LMG 21445 / STM815) (Burkholderia phymatum).